The primary structure comprises 488 residues: Cobyric acid synthase (488 aa).

The GATase cobBQ-type domain maps to 252-442 (RTRICVPILP…VHGLFASDAF (191 aa)). The active-site Nucleophile is Cys-334. Residue His-434 is part of the active site.

This sequence belongs to the CobB/CobQ family. CobQ subfamily.

The protein operates within cofactor biosynthesis; adenosylcobalamin biosynthesis. Catalyzes amidations at positions B, D, E, and G on adenosylcobyrinic A,C-diamide. NH(2) groups are provided by glutamine, and one molecule of ATP is hydrogenolyzed for each amidation. The protein is Cobyric acid synthase of Xanthobacter autotrophicus (strain ATCC BAA-1158 / Py2).